Consider the following 395-residue polypeptide: Elongation factor Tu (395 aa).

The tr-type G domain occupies 10-204; the sequence is KPHVNVGTIG…AVDEYIPEPV (195 aa). A G1 region spans residues 19–26; the sequence is GHVDHGKT. GTP is bound at residue 19 to 26; it reads GHVDHGKT. T26 lines the Mg(2+) pocket. The segment at 60 to 64 is G2; that stretch reads GITIA. The interval 81–84 is G3; the sequence is DCPG. GTP contacts are provided by residues 81-85 and 136-139; these read DCPGH and NKVD. The segment at 136 to 139 is G4; sequence NKVD. The interval 174–176 is G5; that stretch reads SAL.

The protein belongs to the TRAFAC class translation factor GTPase superfamily. Classic translation factor GTPase family. EF-Tu/EF-1A subfamily. In terms of assembly, monomer.

It localises to the cytoplasm. The enzyme catalyses GTP + H2O = GDP + phosphate + H(+). Functionally, GTP hydrolase that promotes the GTP-dependent binding of aminoacyl-tRNA to the A-site of ribosomes during protein biosynthesis. This chain is Elongation factor Tu, found in Exiguobacterium sp. (strain ATCC BAA-1283 / AT1b).